Consider the following 72-residue polypeptide: Translation initiation factor IF-1 (72 aa).

The region spanning 1 to 72 (MSKDDVIEMQ…TRGRITWRAK (72 aa)) is the S1-like domain.

The protein belongs to the IF-1 family. Component of the 30S ribosomal translation pre-initiation complex which assembles on the 30S ribosome in the order IF-2 and IF-3, IF-1 and N-formylmethionyl-tRNA(fMet); mRNA recruitment can occur at any time during PIC assembly.

It is found in the cytoplasm. One of the essential components for the initiation of protein synthesis. Stabilizes the binding of IF-2 and IF-3 on the 30S subunit to which N-formylmethionyl-tRNA(fMet) subsequently binds. Helps modulate mRNA selection, yielding the 30S pre-initiation complex (PIC). Upon addition of the 50S ribosomal subunit IF-1, IF-2 and IF-3 are released leaving the mature 70S translation initiation complex. The polypeptide is Translation initiation factor IF-1 (Clostridium beijerinckii (strain ATCC 51743 / NCIMB 8052) (Clostridium acetobutylicum)).